The sequence spans 28 residues: 50 kDa venom protease (28 aa).

It belongs to the venom metalloproteinase (M12B) family. Zn(2+) is required as a cofactor. Expressed by the venom gland.

It localises to the secreted. This chain is 50 kDa venom protease, found in Proatheris superciliaris (Lowland swamp viper).